The following is a 99-amino-acid chain: Protein Frey (99 aa).

The chain crosses the membrane as a helical span at residues 13 to 29 (AGLSLFALYLVLAAALL). The disordered stretch occupies residues 64 to 90 (RPKHPWPRGPRPLLSRAQQRKRDGPDM).

In terms of assembly, interacts with SPPL2C (via active sites); the interaction stabilizes FREY1 protein and inhibits SPPL2C proteolytic activity. Interacts with IZUMO1; the interaction retains IZUMO1 at the endoplasmic reticulum membrane and coordinates IZUMO1 complex assembly.

It localises to the endoplasmic reticulum membrane. Functionally, key regulator for male fertility expressed transiently in round spermatids where it recruits IZUMO1 at the endoplasmic reticulum (ER) membrane and coordinates the oolemmal binding multimeric complex (IZUMO1 complex) assembly. Upon complete assembly of the IZUMO1 complex, its ER retention is released, facilitating IZUMO1 complex export to the acrosome. Through the interaction with SPPL2C, inhibits its intramembrane protease activity directly accessing the catalytic center of an I-CLiP. The protein is Protein Frey (FREY1) of Bos taurus (Bovine).